Reading from the N-terminus, the 380-residue chain is MMSETIITTPHVVKLISNFFQKKLFSSISTAYPLVIITDVSVQQHLLGPILDHIKMLGYQVIVLTFPPGEPNKTWETFISLQYQLVDQNISPKSSIIGIGGGTVLDMTGFLAATYCRGLPLYLIPTTITAMVDTSIGGKNGINLRGIKNRLGTFYLPKEVWMCPQFLSTLPREEWYHGIAEAIKHGFIADAYLWEFLNSHSKMLFSSSQILHEFIKRNCQIKAAIVAEDPYDRSLRKILNFGHSIAHAIETLAKGTVNHGQAVSVGMMIETRISLAEGVMKTPQLIDQLERLLKRFNLPSTLKDLQSIVPEHLHNSLYSPENIIYTLGYDKKNLSQHELKMIMIEHLGRAAPFNGTYCASPNMEILYDILWSECHVMRHC.

NAD(+) is bound by residues Pro-68–Lys-73, Gly-102–Asp-106, Thr-126–Thr-127, Lys-139, and Lys-148. The Zn(2+) site is built by Glu-181, His-243, and His-259.

Belongs to the sugar phosphate cyclases superfamily. Dehydroquinate synthase family. Requires NAD(+) as cofactor. Co(2+) serves as cofactor. It depends on Zn(2+) as a cofactor.

Its subcellular location is the cytoplasm. It catalyses the reaction 7-phospho-2-dehydro-3-deoxy-D-arabino-heptonate = 3-dehydroquinate + phosphate. The protein operates within metabolic intermediate biosynthesis; chorismate biosynthesis; chorismate from D-erythrose 4-phosphate and phosphoenolpyruvate: step 2/7. Catalyzes the conversion of 3-deoxy-D-arabino-heptulosonate 7-phosphate (DAHP) to dehydroquinate (DHQ). In Chlamydia pneumoniae (Chlamydophila pneumoniae), this protein is 3-dehydroquinate synthase (aroB).